The sequence spans 300 residues: Protoheme IX farnesyltransferase (300 aa).

A run of 9 helical transmembrane segments spans residues 20–40 (ITKA…YLLG), 49–69 (WSVL…SNAY), 97–117 (VTAL…LYTI), 122–142 (AMFA…LKTV), 145–165 (LSVF…WVAA), 176–196 (LFLI…WFLY), 217–237 (ALQV…PVLG), 242–262 (LFIS…MLFY), and 278–298 (LMLV…VDKF).

This sequence belongs to the UbiA prenyltransferase family. Protoheme IX farnesyltransferase subfamily.

The protein localises to the cell inner membrane. The enzyme catalyses heme b + (2E,6E)-farnesyl diphosphate + H2O = Fe(II)-heme o + diphosphate. It participates in porphyrin-containing compound metabolism; heme O biosynthesis; heme O from protoheme: step 1/1. Its function is as follows. Converts heme B (protoheme IX) to heme O by substitution of the vinyl group on carbon 2 of heme B porphyrin ring with a hydroxyethyl farnesyl side group. In Flavobacterium johnsoniae (strain ATCC 17061 / DSM 2064 / JCM 8514 / BCRC 14874 / CCUG 350202 / NBRC 14942 / NCIMB 11054 / UW101) (Cytophaga johnsonae), this protein is Protoheme IX farnesyltransferase.